The primary structure comprises 212 residues: Dephospho-CoA kinase (212 aa).

The DPCK domain occupies 3–204 (ILGLTGSIGM…GSRPAAPVGG (202 aa)). 11–16 (GMGKST) lines the ATP pocket.

Belongs to the CoaE family.

The protein resides in the cytoplasm. It carries out the reaction 3'-dephospho-CoA + ATP = ADP + CoA + H(+). It functions in the pathway cofactor biosynthesis; coenzyme A biosynthesis; CoA from (R)-pantothenate: step 5/5. In terms of biological role, catalyzes the phosphorylation of the 3'-hydroxyl group of dephosphocoenzyme A to form coenzyme A. The protein is Dephospho-CoA kinase of Paramagnetospirillum magneticum (strain ATCC 700264 / AMB-1) (Magnetospirillum magneticum).